Consider the following 227-residue polypeptide: Ribose-5-phosphate isomerase A (227 aa).

Substrate is bound by residues 26-29, 82-85, and 95-98; these read TGST, DGAD, and KGGG. Residue E104 is the Proton acceptor of the active site. Residue K122 coordinates substrate.

It belongs to the ribose 5-phosphate isomerase family. In terms of assembly, homodimer.

It catalyses the reaction aldehydo-D-ribose 5-phosphate = D-ribulose 5-phosphate. The protein operates within carbohydrate degradation; pentose phosphate pathway; D-ribose 5-phosphate from D-ribulose 5-phosphate (non-oxidative stage): step 1/1. Catalyzes the reversible conversion of ribose-5-phosphate to ribulose 5-phosphate. The chain is Ribose-5-phosphate isomerase A from Streptococcus pneumoniae serotype 2 (strain D39 / NCTC 7466).